The primary structure comprises 298 residues: Transcription factor BOA (298 aa).

Disordered regions lie at residues 1–26, 79–143, and 206–232; these read MGKE…EYRI, LRSS…KRPR, and EDPY…GGGS. Acidic residues predominate over residues 10-20; the sequence is YGDDDGEDAGG. Positions 104–113 are enriched in basic and acidic residues; sequence DPKKQKKSDG. Positions 122–131 are enriched in acidic residues; the sequence is STAEEGDSGP. The segment at residues 138–197 is a DNA-binding region (myb-like GARP); the sequence is TSKRPRLVWTPQLHKRFVDVVAHLGIKNAVPKTIMQLMNVEGLTRENVASHLQKYRLYLK. Over residues 209–227 the composition is skewed to polar residues; sequence YSSSDQLFSSTPVPPQSFQ.

Its subcellular location is the nucleus. Transcription factor that is a critical component of the regulatory circuit of the circadian clock. Binds to specific sites on CCA1 promoter leading to CCA1 activation. Is required for the rhythmic expression of other clock genes such as LHY, GI and APRR1/TOC1. This chain is Transcription factor BOA (BOA), found in Arabidopsis thaliana (Mouse-ear cress).